The chain runs to 453 residues: Alpha-2B adrenergic receptor (453 aa).

Residues 1 to 17 (MSGPTMDHQEPYSVQAT) lie on the Extracellular side of the membrane. A helical transmembrane segment spans residues 18 to 42 (AAIASAITFLILFTIFGNALVILAV). Residues 43 to 54 (LTSRSLRAPQNL) lie on the Cytoplasmic side of the membrane. A helical membrane pass occupies residues 55–80 (FLVSLAAADILVATLIIPFSLANELL). Over 81–90 (GYWYFWRAWC) the chain is Extracellular. C90 and C169 are joined by a disulfide. A helical membrane pass occupies residues 91 to 113 (EVYLALDVLFCTSSIVHLCAISL). Over 114–135 (DRYWAVSRALEYNSKRTPRRIK) the chain is Cytoplasmic. The chain crosses the membrane as a helical span at residues 136–158 (CIILTVWLIAAVISLPPLIYKGD). The Extracellular segment spans residues 159–174 (QRPEPRGLPQCELNQE). A helical membrane pass occupies residues 175–198 (AWYILASSIGSFFAPCLIMILVYL). Topologically, residues 199–375 (RIYVIAKRSH…LSREKRFTFV (177 aa)) are cytoplasmic. The segment at 213–331 (GAKRGSGEGE…PASVCNPPLQ (119 aa)) is disordered. Residues 287 to 297 (GQGQKKGTSGA) are compositionally biased toward polar residues. Residues 300 to 314 (EEGDEEDEEEVEECE) are compositionally biased toward acidic residues. Residues 376–399 (LAVVIGVFVVCWFPFFFSYSLGAI) traverse the membrane as a helical segment. At 400-408 (CPQHCKVPH) the chain is on the extracellular side. The chain crosses the membrane as a helical span at residues 409–432 (GLFQFFFWIGYCNSSLNPVIYTVF). The Cytoplasmic segment spans residues 433-453 (NQDFRRAFRRILCRPWTQTGW). Residue C445 is the site of S-palmitoyl cysteine attachment.

It belongs to the G-protein coupled receptor 1 family. Adrenergic receptor subfamily. ADRA2B sub-subfamily. Interacts with RAB26. Interacts with PPP1R9B. Interacts with GGA1, GGA2 and GGA3.

Its subcellular location is the cell membrane. Alpha-2 adrenergic receptors mediate the catecholamine-induced inhibition of adenylate cyclase through the action of G proteins. The polypeptide is Alpha-2B adrenergic receptor (Adra2b) (Rattus norvegicus (Rat)).